A 100-amino-acid polypeptide reads, in one-letter code: Urease subunit gamma (100 aa).

Belongs to the urease gamma subunit family. Heterotrimer of UreA (gamma), UreB (beta) and UreC (alpha) subunits. Three heterotrimers associate to form the active enzyme.

The protein localises to the cytoplasm. It catalyses the reaction urea + 2 H2O + H(+) = hydrogencarbonate + 2 NH4(+). The protein operates within nitrogen metabolism; urea degradation; CO(2) and NH(3) from urea (urease route): step 1/1. This Azoarcus sp. (strain BH72) protein is Urease subunit gamma.